A 373-amino-acid polypeptide reads, in one-letter code: Chaperone protein DnaJ (373 aa).

The 65-residue stretch at Asn-4–Gly-68 folds into the J domain. The CR-type zinc finger occupies Gly-136–Gln-214. Residues Cys-149, Cys-152, Cys-166, Cys-169, Cys-188, Cys-191, Cys-202, and Cys-205 each coordinate Zn(2+). CXXCXGXG motif repeat units lie at residues Cys-149–Gly-156, Cys-166–Gly-173, Cys-188–Gly-195, and Cys-202–Gly-209.

The protein belongs to the DnaJ family. As to quaternary structure, homodimer. The cofactor is Zn(2+).

The protein resides in the cytoplasm. Functionally, participates actively in the response to hyperosmotic and heat shock by preventing the aggregation of stress-denatured proteins and by disaggregating proteins, also in an autonomous, DnaK-independent fashion. Unfolded proteins bind initially to DnaJ; upon interaction with the DnaJ-bound protein, DnaK hydrolyzes its bound ATP, resulting in the formation of a stable complex. GrpE releases ADP from DnaK; ATP binding to DnaK triggers the release of the substrate protein, thus completing the reaction cycle. Several rounds of ATP-dependent interactions between DnaJ, DnaK and GrpE are required for fully efficient folding. Also involved, together with DnaK and GrpE, in the DNA replication of plasmids through activation of initiation proteins. The protein is Chaperone protein DnaJ of Rickettsia rickettsii (strain Sheila Smith).